The chain runs to 345 residues: IGF-like family receptor 1 (345 aa).

The N-terminal stretch at 1-20 (MGPSWLLWTVAVAVLLLTRA) is a signal peptide. At 21 to 163 (ASMEASSFCG…SSRPGFVSAS (143 aa)) the chain is on the extracellular side. N87 carries an N-linked (GlcNAc...) asparagine glycan. Residues 106 to 149 (VESPGRTHKQCRKKPVPPKDVCPLKPEDAGASSSPGRWSLGQTT) are disordered. Residues 111 to 121 (RTHKQCRKKPV) are compositionally biased toward basic residues. Residues 136–149 (ASSSPGRWSLGQTT) show a composition bias toward polar residues. Residues 164 to 184 (VLPLAVLPLLLVLLLILAVVL) traverse the membrane as a helical segment. Residues 185 to 345 (LSLFKRKVRS…DALQVLSKLG (161 aa)) lie on the Cytoplasmic side of the membrane.

In terms of tissue distribution, ubiquitously expressed with higher expression in lymph node. Highly expressed in T-cells and monocytes.

It is found in the cell membrane. In terms of biological role, probable cell membrane receptor for the IGF-like family protein IGFL. This is IGF-like family receptor 1 (Igflr1) from Mus musculus (Mouse).